Reading from the N-terminus, the 344-residue chain is UDP-3-O-acylglucosamine N-acyltransferase (344 aa).

The Proton acceptor role is filled by H248.

Belongs to the transferase hexapeptide repeat family. LpxD subfamily. Homotrimer.

It catalyses the reaction a UDP-3-O-[(3R)-3-hydroxyacyl]-alpha-D-glucosamine + a (3R)-hydroxyacyl-[ACP] = a UDP-2-N,3-O-bis[(3R)-3-hydroxyacyl]-alpha-D-glucosamine + holo-[ACP] + H(+). It functions in the pathway bacterial outer membrane biogenesis; LPS lipid A biosynthesis. Its function is as follows. Catalyzes the N-acylation of UDP-3-O-acylglucosamine using 3-hydroxyacyl-ACP as the acyl donor. Is involved in the biosynthesis of lipid A, a phosphorylated glycolipid that anchors the lipopolysaccharide to the outer membrane of the cell. The protein is UDP-3-O-acylglucosamine N-acyltransferase of Prochlorococcus marinus subsp. pastoris (strain CCMP1986 / NIES-2087 / MED4).